The sequence spans 447 residues: Phosphoglucosamine mutase (447 aa).

Serine 102 functions as the Phosphoserine intermediate in the catalytic mechanism. The Mg(2+) site is built by serine 102, aspartate 241, aspartate 243, and aspartate 245. Residue serine 102 is modified to Phosphoserine.

Belongs to the phosphohexose mutase family. It depends on Mg(2+) as a cofactor. In terms of processing, activated by phosphorylation.

It carries out the reaction alpha-D-glucosamine 1-phosphate = D-glucosamine 6-phosphate. Functionally, catalyzes the conversion of glucosamine-6-phosphate to glucosamine-1-phosphate. This is Phosphoglucosamine mutase from Pseudomonas syringae pv. tomato (strain ATCC BAA-871 / DC3000).